Here is a 360-residue protein sequence, read N- to C-terminus: Phospho-N-acetylmuramoyl-pentapeptide-transferase (360 aa).

Transmembrane regions (helical) follow at residues 21–41 (YITFRSIMALLTALIIGLWIG), 73–93 (TMGGIMILFAIGVSTLLWADL), 98–118 (VWFVLFILFGYGVVGFVDDYW), 132–152 (WKYFWLSVIALVSAFGMYAIG), 168–188 (VMPQLGLFYIVLTYFVIVGTS), 199–219 (GLAIVPLIMVAGAFALIAWAT), 236–256 (SGELVILCTAIVGAGLGFLWF), 263–283 (VFMGDVGSLSLGGALGVIAVL), 288–308 (LLLVVMGGVFVVEALSVILQV), and 338–358 (VIVRFWIITLMLVLIGLVTLK).

This sequence belongs to the glycosyltransferase 4 family. MraY subfamily. It depends on Mg(2+) as a cofactor.

The protein resides in the cell inner membrane. The enzyme catalyses UDP-N-acetyl-alpha-D-muramoyl-L-alanyl-gamma-D-glutamyl-meso-2,6-diaminopimeloyl-D-alanyl-D-alanine + di-trans,octa-cis-undecaprenyl phosphate = di-trans,octa-cis-undecaprenyl diphospho-N-acetyl-alpha-D-muramoyl-L-alanyl-D-glutamyl-meso-2,6-diaminopimeloyl-D-alanyl-D-alanine + UMP. It functions in the pathway cell wall biogenesis; peptidoglycan biosynthesis. Catalyzes the initial step of the lipid cycle reactions in the biosynthesis of the cell wall peptidoglycan: transfers peptidoglycan precursor phospho-MurNAc-pentapeptide from UDP-MurNAc-pentapeptide onto the lipid carrier undecaprenyl phosphate, yielding undecaprenyl-pyrophosphoryl-MurNAc-pentapeptide, known as lipid I. In Glaesserella parasuis serovar 5 (strain SH0165) (Haemophilus parasuis), this protein is Phospho-N-acetylmuramoyl-pentapeptide-transferase.